The following is a 275-amino-acid chain: Ribosomal RNA small subunit methyltransferase A (275 aa).

Positions 21, 23, 48, 69, 94, and 115 each coordinate S-adenosyl-L-methionine.

Belongs to the class I-like SAM-binding methyltransferase superfamily. rRNA adenine N(6)-methyltransferase family. RsmA subfamily.

The protein resides in the cytoplasm. The enzyme catalyses adenosine(1518)/adenosine(1519) in 16S rRNA + 4 S-adenosyl-L-methionine = N(6)-dimethyladenosine(1518)/N(6)-dimethyladenosine(1519) in 16S rRNA + 4 S-adenosyl-L-homocysteine + 4 H(+). In terms of biological role, specifically dimethylates two adjacent adenosines (A1518 and A1519) in the loop of a conserved hairpin near the 3'-end of 16S rRNA in the 30S particle. May play a critical role in biogenesis of 30S subunits. This Clostridium botulinum (strain Langeland / NCTC 10281 / Type F) protein is Ribosomal RNA small subunit methyltransferase A.